Here is a 93-residue protein sequence, read N- to C-terminus: Small ribosomal subunit protein uS19 (93 aa).

This sequence belongs to the universal ribosomal protein uS19 family.

In terms of biological role, protein S19 forms a complex with S13 that binds strongly to the 16S ribosomal RNA. In Desulfitobacterium hafniense (strain DSM 10664 / DCB-2), this protein is Small ribosomal subunit protein uS19.